The chain runs to 330 residues: Phosphate acyltransferase (330 aa).

This sequence belongs to the PlsX family. Homodimer. Probably interacts with PlsY.

It localises to the cytoplasm. The enzyme catalyses a fatty acyl-[ACP] + phosphate = an acyl phosphate + holo-[ACP]. Its pathway is lipid metabolism; phospholipid metabolism. Functionally, catalyzes the reversible formation of acyl-phosphate (acyl-PO(4)) from acyl-[acyl-carrier-protein] (acyl-ACP). This enzyme utilizes acyl-ACP as fatty acyl donor, but not acyl-CoA. The sequence is that of Phosphate acyltransferase from Lysinibacillus sphaericus (strain C3-41).